Here is a 201-residue protein sequence, read N- to C-terminus: FMN-dependent NADH:quinone oxidoreductase (201 aa).

FMN-binding positions include Ser10, 16–18 (SQS), 96–99 (MYNF), and 140–143 (SRGG).

This sequence belongs to the azoreductase type 1 family. Homodimer. The cofactor is FMN.

The catalysed reaction is 2 a quinone + NADH + H(+) = 2 a 1,4-benzosemiquinone + NAD(+). It carries out the reaction N,N-dimethyl-1,4-phenylenediamine + anthranilate + 2 NAD(+) = 2-(4-dimethylaminophenyl)diazenylbenzoate + 2 NADH + 2 H(+). In terms of biological role, quinone reductase that provides resistance to thiol-specific stress caused by electrophilic quinones. Its function is as follows. Also exhibits azoreductase activity. Catalyzes the reductive cleavage of the azo bond in aromatic azo compounds to the corresponding amines. This Cronobacter sakazakii (strain ATCC BAA-894) (Enterobacter sakazakii) protein is FMN-dependent NADH:quinone oxidoreductase.